Consider the following 582-residue polypeptide: ATP-dependent lipid A-core flippase (582 aa).

6 consecutive transmembrane segments (helical) span residues 27–48 (LVVS…ISLL), 63–85 (FLRI…GFAS), 144–168 (VSIV…WQLS), 170–188 (VLIV…VSKR), 244–266 (LVSA…LFAV), and 283–302 (TFTV…KALT). Residues 28–310 (VVSTIALVIN…LTSVTSEFQR (283 aa)) form the ABC transmembrane type-1 domain. The ABC transporter domain occupies 342–578 (VDVKDVTFTY…DGAYAQLHRI (237 aa)). 376-383 (GRSGSGKS) contacts ATP.

It belongs to the ABC transporter superfamily. Lipid exporter (TC 3.A.1.106) family. Homodimer.

Its subcellular location is the cell inner membrane. The enzyme catalyses ATP + H2O + lipid A-core oligosaccharideSide 1 = ADP + phosphate + lipid A-core oligosaccharideSide 2.. Involved in lipopolysaccharide (LPS) biosynthesis. Translocates lipid A-core from the inner to the outer leaflet of the inner membrane. Transmembrane domains (TMD) form a pore in the inner membrane and the ATP-binding domain (NBD) is responsible for energy generation. Shows ATPase activity. In Vibrio cholerae serotype O1 (strain ATCC 39315 / El Tor Inaba N16961), this protein is ATP-dependent lipid A-core flippase.